The primary structure comprises 171 residues: Replication restart protein PriC (171 aa).

This sequence belongs to the PriC family. Monomer. Component of the replication restart primosome, which is composed of PriA, PriB, PriC, DnaBe and DnaT; DnaG primase associates transiently with this complex. Interacts with the C-terminus of SSB. SSB interaction is required to load the main replicative helicase onto substrate replication forks. Interacts with helicase DnaB alone and in the DnaB-DnaC complex, probably 1:1 binding with DnaB.

Functionally, involved in the restart of stalled replication forks, which reloads the DnaB replicative helicase on sites other than the origin of replication. In vitro can load (E.coli) DnaB replicative helicase from a DnaB-DnaC complex on a single-stranded DNA (ssDNA)-binding protein (SSB)-coated stalled replication fork with no leading- or lagging-strand in the absence of other primosome proteins (PriA, PriB or DnaT). Binds SSB (tested with E.coli protein) and ssDNA. Complements priC in an E.coli priB-priC double deletion. The chain is Replication restart protein PriC from Cronobacter sakazakii (strain ATCC BAA-894) (Enterobacter sakazakii).